Consider the following 417-residue polypeptide: Lipoyl synthase, mitochondrial (417 aa).

The segment at 35 to 56 (EANPTDLAGLKRKAKRRPTKLA) is disordered. Residues 44–53 (LKRKAKRRPT) are compositionally biased toward basic residues. [4Fe-4S] cluster-binding residues include cysteine 122, cysteine 127, cysteine 133, cysteine 152, cysteine 156, cysteine 159, and serine 367. Positions 137-356 (KKSEATATIM…RDKALEMGFL (220 aa)) constitute a Radical SAM core domain. Residues 389-417 (IEEQQHDKENNNLLLSKEDEKTTQEKANF) form a disordered region. Positions 391-417 (EQQHDKENNNLLLSKEDEKTTQEKANF) are enriched in basic and acidic residues.

The protein belongs to the radical SAM superfamily. Lipoyl synthase family. Requires [4Fe-4S] cluster as cofactor.

Its subcellular location is the mitochondrion. It carries out the reaction [[Fe-S] cluster scaffold protein carrying a second [4Fe-4S](2+) cluster] + N(6)-octanoyl-L-lysyl-[protein] + 2 oxidized [2Fe-2S]-[ferredoxin] + 2 S-adenosyl-L-methionine + 4 H(+) = [[Fe-S] cluster scaffold protein] + N(6)-[(R)-dihydrolipoyl]-L-lysyl-[protein] + 4 Fe(3+) + 2 hydrogen sulfide + 2 5'-deoxyadenosine + 2 L-methionine + 2 reduced [2Fe-2S]-[ferredoxin]. Its pathway is protein modification; protein lipoylation via endogenous pathway; protein N(6)-(lipoyl)lysine from octanoyl-[acyl-carrier-protein]: step 2/2. In terms of biological role, catalyzes the radical-mediated insertion of two sulfur atoms into the C-6 and C-8 positions of the octanoyl moiety bound to the lipoyl domains of lipoate-dependent enzymes, thereby converting the octanoylated domains into lipoylated derivatives. This Komagataella phaffii (strain GS115 / ATCC 20864) (Yeast) protein is Lipoyl synthase, mitochondrial.